The primary structure comprises 904 residues: Translation initiation factor IF-2 (904 aa).

Disordered regions lie at residues R134 to V248 and H267 to P315. Positions R136 to E177 are enriched in basic and acidic residues. 2 stretches are compositionally biased toward low complexity: residues E178–A230 and G285–N303. Residues T403–K572 form the tr-type G domain. Residues G412–T419 form a G1 region. A GTP-binding site is contributed by G412–T419. A G2 region spans residues G437 to H441. The G3 stretch occupies residues D458–G461. GTP-binding positions include D458–H462 and N512–D515. Positions N512–D515 are G4. The G5 stretch occupies residues S548–K550.

It belongs to the TRAFAC class translation factor GTPase superfamily. Classic translation factor GTPase family. IF-2 subfamily.

The protein resides in the cytoplasm. One of the essential components for the initiation of protein synthesis. Protects formylmethionyl-tRNA from spontaneous hydrolysis and promotes its binding to the 30S ribosomal subunits. Also involved in the hydrolysis of GTP during the formation of the 70S ribosomal complex. This chain is Translation initiation factor IF-2, found in Xanthomonas oryzae pv. oryzae (strain PXO99A).